The chain runs to 447 residues: MAAQTAPELAKLDLNKNSGSAEANVVSNGGSDKDDAENEGDSDDDKDEAGGSAEVNTEKKKKKKRSKKKKKAAKVQSSPPRIPLTTLFPNNAFPEGEIVEYLNDNSYRTTNEEKRHLDRMNNDFLTEYRQAAEIHRQVRQYAQKELIKPGATLTDIAEGIEDGVRHLTGHMGLEEGDSLIAGMGFPTGLNINHCAAHYSPNAGNKVVLQHGDVMKVDFGVHVNGRIVDSAFTVAFDPVFDPLLTAVKEATNTGIKEAGIDVRMSDIGAAIQETMESYELEINGTSYPIKAVRNLNGHTIGQYEIHGGVNGKSVPIVKGGDQTKMEEGETYAIETFGSTGKGYVRDDMETSHYAKVPNAPSVPLRLSSAKNLYSLINKNFGTLPFCRRYLDRLGQEKYLLGLNNLVSSGLVDAYPPLCDVKGSYTAQFEHTILLRPNVKEVISRGDDY.

The interval Met-1–Pro-89 is disordered. The segment covering Asn-15–Gly-30 has biased composition (polar residues). Positions Asp-34–Asp-47 are enriched in acidic residues. Basic residues predominate over residues Lys-59 to Ala-73. Residue His-197 coordinates substrate. A divalent metal cation is bound by residues Asp-217, Asp-228, and His-297. Substrate is bound at residue His-305. Residues Glu-333 and Glu-428 each contribute to the a divalent metal cation site.

Belongs to the peptidase M24A family. Methionine aminopeptidase eukaryotic type 2 subfamily. It depends on Co(2+) as a cofactor. Zn(2+) is required as a cofactor. The cofactor is Mn(2+). Fe(2+) serves as cofactor.

It is found in the cytoplasm. It carries out the reaction Release of N-terminal amino acids, preferentially methionine, from peptides and arylamides.. Functionally, cotranslationally removes the N-terminal methionine from nascent proteins. The N-terminal methionine is often cleaved when the second residue in the primary sequence is small and uncharged (Met-Ala-, Cys, Gly, Pro, Ser, Thr, or Val). The protein is Methionine aminopeptidase 2-2 of Arthroderma otae (strain ATCC MYA-4605 / CBS 113480) (Microsporum canis).